The chain runs to 545 residues: Beta-sesquiphellandrene synthase (545 aa).

The Mg(2+) site is built by D299, D303, N443, S447, and E451. Positions 299-303 match the DDXXD motif motif; the sequence is DDIMD.

It belongs to the terpene synthase family. Mg(2+) is required as a cofactor. The cofactor is Mn(2+).

The protein resides in the cytoplasm. The enzyme catalyses (2E,6E)-farnesyl diphosphate = beta-sesquiphellandrene + diphosphate. It functions in the pathway secondary metabolite biosynthesis; terpenoid biosynthesis. Functionally, sesquiterpene synthase converting farnesyl diphosphate into beta-sesquiphellandrene and six minor products, zingiberene, 7-epi-sesquithujene, sesquisabinene A, (E)-alpha-bergamotene, (E)-beta-farnesene and beta-bisabolene. Can also accept geranyl diphosphate as substrate, producing nine monoterpenes, with myrcene and limonene as the major products. In Sorghum bicolor (Sorghum), this protein is Beta-sesquiphellandrene synthase (TPS2).